The chain runs to 96 residues: Dynein light chain roadblock-type 1 (96 aa).

A2 is subject to N-acetylalanine.

The protein belongs to the GAMAD family. Homodimer. The cytoplasmic dynein 1 complex consists of two catalytic heavy chains (HCs) and a number of non-catalytic subunits presented by intermediate chains (ICs), light intermediate chains (LICs) and light chains (LCs); the composition seems to vary in respect to the IC, LIC and LC composition. The heavy chain homodimer serves as a scaffold for the probable homodimeric assembly of the respective non-catalytic subunits. The ICs and LICs bind directly to the HC dimer and the LCs assemble on the IC dimer. Interacts with DYNLRB2. Interacts with DYNC1I1 and DYNC1I2. Interacts with RAB6A isoform 1 (GTP-bound); the interaction is direct. Interacts with RAB6A isoform 2 (GDP-bound); the interaction is direct. Interacts with RAB6B (GDP-bound). High expression in heart, liver, brain and pancreas; moderate in placenta, skeletal muscle and kidney; low in lung, prostate, testis, small intestine and colon. Isoform 1 expression is up-regulated in 64% hepatocellular carcinoma (HCC) patients.

The protein resides in the cytoplasm. It localises to the cytoskeleton. Functionally, acts as one of several non-catalytic accessory components of the cytoplasmic dynein 1 complex that are thought to be involved in linking dynein to cargos and to adapter proteins that regulate dynein function. Cytoplasmic dynein 1 acts as a motor for the intracellular retrograde motility of vesicles and organelles along microtubules. This Homo sapiens (Human) protein is Dynein light chain roadblock-type 1.